Reading from the N-terminus, the 632-residue chain is Probable potassium transport system protein Kup 1 (632 aa).

12 helical membrane-spanning segments follow: residues 17–37 (LFYL…TSPL), 60–80 (LISL…VLFL), 106–126 (TAIL…DAMI), 146–166 (LADY…VVQS), 175–195 (FFGP…ISHI), 210–230 (AVAF…AVFL), 254–274 (WFLL…ALVL), 292–312 (ALLP…QAVI), 344–364 (IFVP…VLGF), 370–390 (LATA…IMAF), 401–421 (LPVA…FLGA), and 426–446 (IHDG…VMWT).

Belongs to the HAK/KUP transporter (TC 2.A.72) family.

The protein resides in the cell inner membrane. It carries out the reaction K(+)(in) + H(+)(in) = K(+)(out) + H(+)(out). In terms of biological role, transport of potassium into the cell. Likely operates as a K(+):H(+) symporter. The polypeptide is Probable potassium transport system protein Kup 1 (Rhizobium johnstonii (strain DSM 114642 / LMG 32736 / 3841) (Rhizobium leguminosarum bv. viciae)).